The following is a 386-amino-acid chain: Glutamate 5-kinase (386 aa).

Residue K28 coordinates ATP. 3 residues coordinate substrate: S68, D155, and N167. T187–D188 serves as a coordination point for ATP. Residues R294 to I372 form the PUA domain.

This sequence belongs to the glutamate 5-kinase family.

Its subcellular location is the cytoplasm. The enzyme catalyses L-glutamate + ATP = L-glutamyl 5-phosphate + ADP. The protein operates within amino-acid biosynthesis; L-proline biosynthesis; L-glutamate 5-semialdehyde from L-glutamate: step 1/2. In terms of biological role, catalyzes the transfer of a phosphate group to glutamate to form L-glutamate 5-phosphate. The polypeptide is Glutamate 5-kinase (Hahella chejuensis (strain KCTC 2396)).